The primary structure comprises 157 residues: Chromophore lyase CpcS/CpeS 1 (157 aa).

The protein belongs to the CpcS/CpeS biliprotein lyase family.

The protein localises to the plastid. The protein resides in the organellar chromatophore. In terms of biological role, covalently attaches a chromophore to Cys residue(s) of phycobiliproteins. The chain is Chromophore lyase CpcS/CpeS 1 from Paulinella chromatophora.